The chain runs to 59 residues: uncharacterized protein (59 aa).

A helical membrane pass occupies residues 7 to 24 (FLLVFIILAQLLSCTPSA).

The protein localises to the membrane. This is an uncharacterized protein from Rickettsia prowazekii (strain Madrid E).